The following is a 764-amino-acid chain: Polyribonucleotide nucleotidyltransferase (764 aa).

2 residues coordinate Mg(2+): Asp541 and Asp547. One can recognise a KH domain in the interval 607-666; sequence PRVTAIKIPVDKIGEVIGPKGKVINQITEDTGANISIEDDGTVFVGATDGPSAQAAIDAI. The 70-residue stretch at 678-747 folds into the S1 motif domain; that stretch reads GERFLGTVVK…NRGKISLVPV (70 aa).

This sequence belongs to the polyribonucleotide nucleotidyltransferase family. The cofactor is Mg(2+).

It is found in the cytoplasm. The catalysed reaction is RNA(n+1) + phosphate = RNA(n) + a ribonucleoside 5'-diphosphate. Involved in mRNA degradation. Catalyzes the phosphorolysis of single-stranded polyribonucleotides processively in the 3'- to 5'-direction. This is Polyribonucleotide nucleotidyltransferase from Nocardia farcinica (strain IFM 10152).